We begin with the raw amino-acid sequence, 228 residues long: Ephrin-A5 (228 aa).

The first 20 residues, Met1 to Ser20, serve as a signal peptide directing secretion. An Ephrin RBD domain is found at Ala29 to Asn162. Asn37 carries N-linked (GlcNAc...) asparagine glycosylation. Disulfide bonds link Cys62-Cys102 and Cys90-Cys151. The tract at residues Glu186–Ala205 is disordered. Residues Asp190–Arg200 show a composition bias toward basic and acidic residues. Asn203 carries the GPI-anchor amidated asparagine lipid modification. A propeptide spans Ala204–Leu228 (removed in mature form).

This sequence belongs to the ephrin family. Binds to EPHB2. Interacts with EPHA8; activates EPHA8. Binds to the receptor tyrosine kinases EPHA2, EPHA3 and EPHB1. Forms a ternary EFNA5-EPHA3-ADAM10 complex mediating EFNA5 extracellular domain shedding by ADAM10 which regulates the EFNA5-EPHA3 complex internalization and function.

It localises to the cell membrane. The protein resides in the membrane. Its subcellular location is the caveola. Cell surface GPI-bound ligand for Eph receptors, a family of receptor tyrosine kinases which are crucial for migration, repulsion and adhesion during neuronal, vascular and epithelial development. Binds promiscuously Eph receptors residing on adjacent cells, leading to contact-dependent bidirectional signaling into neighboring cells. The signaling pathway downstream of the receptor is referred to as forward signaling while the signaling pathway downstream of the ephrin ligand is referred to as reverse signaling. Induces compartmentalized signaling within a caveolae-like membrane microdomain when bound to the extracellular domain of its cognate receptor. This signaling event requires the activity of the Fyn tyrosine kinase. Activates the EPHA3 receptor to regulate cell-cell adhesion and cytoskeletal organization. With the receptor EPHA2 may regulate lens fiber cells shape and interactions and be important for lens transparency maintenance. May function actively to stimulate axon fasciculation. The interaction of EFNA5 with EPHA5 also mediates communication between pancreatic islet cells to regulate glucose-stimulated insulin secretion. Cognate/functional ligand for EPHA7, their interaction regulates brain development modulating cell-cell adhesion and repulsion. This is Ephrin-A5 (EFNA5) from Homo sapiens (Human).